We begin with the raw amino-acid sequence, 304 residues long: Syntaxin-132 (304 aa).

N-acetylmethionine is present on Met1. The interval 1-30 (MNDLLKGSFELPRGQSSREGDVELGEQQGG) is disordered. At 1–275 (MNDLLKGSFE…AKSLQKNSRK (275 aa)) the chain is on the cytoplasmic side. 2 coiled-coil regions span residues 34–67 (LEDFFKKVQVIDKQYDKLDKLLKKLQASHEESKS) and 129–162 (TLSLKKKLKDKMAEFQVLRENIQQEYRDVVDRRV). In terms of domain architecture, t-SNARE coiled-coil homology spans 204–266 (LAEIQERHDA…QSGNTALQRA (63 aa)). Residues 276 to 296 (WMCIAIIILLIVVAVIVVGVL) traverse the membrane as a helical; Anchor for type IV membrane protein segment. Over 297–304 (KPWKNKSA) the chain is Vesicular.

Belongs to the syntaxin family. As to quaternary structure, part of the t-SNARE complex. In terms of tissue distribution, widely expressed in all tissues throughout plant development.

It localises to the cell membrane. Its function is as follows. Vesicle trafficking protein that functions in the secretory pathway. Acts in coordination with SYP123 to mediate tip-focused membrane trafficking for root hair tip growth. Functions in root hair elongation by forming SNARE complexes with VAMP721,VAMP722 or VAMP724. Involved in cytokinesis. Acts as a cell plate-specific syntaxin, required for the fusion of vesicles at the plane of cell division. Required for secretory trafficking to the plasma membrane during interphase. Involved in the regulation of density of the H(+) ATPase proteins at the plasma membrane of root and shoot in epidermal cells. Modulation of SYP132 expression by auxin affects clathrin-sensitive H(+) ATPase traffic from the plasma membrane, and influences apoplastic acidification and plant growth. This Arabidopsis thaliana (Mouse-ear cress) protein is Syntaxin-132.